Reading from the N-terminus, the 166-residue chain is 6,7-dimethyl-8-ribityllumazine synthase (166 aa).

Residues phenylalanine 24, 58–60 (ALE), and 82–84 (AVI) each bind 5-amino-6-(D-ribitylamino)uracil. (2S)-2-hydroxy-3-oxobutyl phosphate is bound at residue 87–88 (ET). The active-site Proton donor is the histidine 90. A 5-amino-6-(D-ribitylamino)uracil-binding site is contributed by asparagine 115. Arginine 129 lines the (2S)-2-hydroxy-3-oxobutyl phosphate pocket.

This sequence belongs to the DMRL synthase family.

The catalysed reaction is (2S)-2-hydroxy-3-oxobutyl phosphate + 5-amino-6-(D-ribitylamino)uracil = 6,7-dimethyl-8-(1-D-ribityl)lumazine + phosphate + 2 H2O + H(+). Its pathway is cofactor biosynthesis; riboflavin biosynthesis; riboflavin from 2-hydroxy-3-oxobutyl phosphate and 5-amino-6-(D-ribitylamino)uracil: step 1/2. In terms of biological role, catalyzes the formation of 6,7-dimethyl-8-ribityllumazine by condensation of 5-amino-6-(D-ribitylamino)uracil with 3,4-dihydroxy-2-butanone 4-phosphate. This is the penultimate step in the biosynthesis of riboflavin. This Ralstonia pickettii (strain 12J) protein is 6,7-dimethyl-8-ribityllumazine synthase.